The chain runs to 349 residues: 4-hydroxy-3-methylbut-2-en-1-yl diphosphate synthase (flavodoxin) (349 aa).

[4Fe-4S] cluster is bound by residues Cys264, Cys267, Cys299, and Glu306.

It belongs to the IspG family. Requires [4Fe-4S] cluster as cofactor.

The enzyme catalyses (2E)-4-hydroxy-3-methylbut-2-enyl diphosphate + oxidized [flavodoxin] + H2O + 2 H(+) = 2-C-methyl-D-erythritol 2,4-cyclic diphosphate + reduced [flavodoxin]. Its pathway is isoprenoid biosynthesis; isopentenyl diphosphate biosynthesis via DXP pathway; isopentenyl diphosphate from 1-deoxy-D-xylulose 5-phosphate: step 5/6. In terms of biological role, converts 2C-methyl-D-erythritol 2,4-cyclodiphosphate (ME-2,4cPP) into 1-hydroxy-2-methyl-2-(E)-butenyl 4-diphosphate. The polypeptide is 4-hydroxy-3-methylbut-2-en-1-yl diphosphate synthase (flavodoxin) (Clostridium perfringens (strain 13 / Type A)).